The chain runs to 476 residues: Carbamoyl phosphate synthase arginine-specific small chain (476 aa).

A mitochondrion-targeting transit peptide spans 1 to 24; it reads MFSHLLKPAARSAGLLGHVNRRYL. Positions 228-415 constitute a Glutamine amidotransferase type-1 domain; the sequence is HVALIDCGVK…IQNVQRYKDH (188 aa). The active-site Nucleophile is the Cys-304. Residues His-388 and Glu-390 contribute to the active site.

Belongs to the CarA family. Heterodimer composed of 2 chains; the small (or glutamine) chain promotes the hydrolysis of glutamine to ammonia, which is used by the large (or ammonia) chain to synthesize carbamoyl phosphate.

Its subcellular location is the mitochondrion matrix. It catalyses the reaction hydrogencarbonate + L-glutamine + 2 ATP + H2O = carbamoyl phosphate + L-glutamate + 2 ADP + phosphate + 2 H(+). It carries out the reaction L-glutamine + H2O = L-glutamate + NH4(+). Its pathway is amino-acid biosynthesis; L-arginine biosynthesis; carbamoyl phosphate from bicarbonate: step 1/1. Its function is as follows. Small subunit of the arginine-specific carbamoyl phosphate synthase (CPSase). CPSase catalyzes the formation of carbamoyl phosphate from the ammonia moiety of glutamine, carbonate, and phosphate donated by ATP, the first step of the arginine biosynthetic pathway. The small subunit (glutamine amidotransferase) binds and cleaves glutamine to supply the large subunit with the substrate ammonia. This chain is Carbamoyl phosphate synthase arginine-specific small chain (CPA1), found in Phaeosphaeria nodorum (strain SN15 / ATCC MYA-4574 / FGSC 10173) (Glume blotch fungus).